A 285-amino-acid chain; its full sequence is MRPMTHVPVLYQEALDLLAVRPGGVYVDATLGGAGHARGILERGGRVIGLDQDPEAVARAKGLHLPGLTVVQGNFRHLKRHLAALGVERVDGILADLGVSSFHLDDPSRGFSYQKEGPLDMRMGLEGPTAKEVVNRLPLEALARLLRELGEEPQAYRIARAIVAAREKAPIETTTQLAEIVRKAVGFRRAGHPARKTFQALRIYVNDELNALKEFLEQAAEVLAPGGRLVVIAFHSLEDRVVKRFLRESGLKVLTKKPLVPSEKEAAQNPRARSAKLRAAEKEAP.

S-adenosyl-L-methionine-binding positions include 34-36 (AGH), D51, F75, D96, and H103. The interval 259–285 (LVPSEKEAAQNPRARSAKLRAAEKEAP) is disordered.

It belongs to the methyltransferase superfamily. RsmH family.

The protein localises to the cytoplasm. It catalyses the reaction cytidine(1402) in 16S rRNA + S-adenosyl-L-methionine = N(4)-methylcytidine(1402) in 16S rRNA + S-adenosyl-L-homocysteine + H(+). Functionally, specifically methylates the N4 position of cytidine in position 1402 (C1402) of 16S rRNA. This Thermus thermophilus (strain ATCC 27634 / DSM 579 / HB8) protein is Ribosomal RNA small subunit methyltransferase H.